Consider the following 147-residue polypeptide: Deoxyuridine 5'-triphosphate nucleotidohydrolase (147 aa).

Residue R24 coordinates Mg(2+). Residues 68–70 (PRS), 82–85 (GVID), Y88, G93, I95, and R111 contribute to the dUTP site.

This sequence belongs to the dUTPase family.

The catalysed reaction is dUTP + H2O = dUMP + diphosphate + H(+). In terms of biological role, this enzyme is involved in nucleotide metabolism: it produces dUMP, the immediate precursor of thymidine nucleotides and it decreases the intracellular concentration of dUTP so that uracil cannot be incorporated into DNA. This is Deoxyuridine 5'-triphosphate nucleotidohydrolase (OPG046) from Homo sapiens (Human).